Reading from the N-terminus, the 187-residue chain is Meiotically up-regulated gene 155 protein (187 aa).

Residues 1–24 are disordered; the sequence is MRPTSGCSKDDTIQKQNRRHNTVD. The next 2 membrane-spanning stretches (helical) occupy residues 83–105 and 163–183; these read IISY…PFSH and VMLT…LFIF.

The protein resides in the cytoplasm. It is found in the nucleus membrane. In terms of biological role, has a role in meiosis. This is Meiotically up-regulated gene 155 protein (mug155) from Schizosaccharomyces pombe (strain 972 / ATCC 24843) (Fission yeast).